A 572-amino-acid chain; its full sequence is MNLKALPAIEGDHNLKNYEETYRHFDWAEAEKHFSWHETGKLNAAYEAIDRHAESFRKNKVALYYKDAKRDEKYTFKEMKEESNRAGNVLRRYGNVEKGDRVFIFMPRSPELYFIMLGAIKIGAIAGPLFEAFMEGAVKDRLENSEAKVVVTTPELLERIPVDKLPHLQHVFVVGGEAESGTNIINYDEAAKQESTRLDIEWMDKKDGFLLHYTSGSTGTPKGVLHVHEAMIQQYQTGKWVLDLKEEDIYWCTADPGWVTGTVYGIFAPWLNGATNVIVGGRFSPESWYGTIEQLGVNVWYSAPTAFRMLMGAGDEMAAKYDLTSLRHVLSVGEPLNPEVIRWGHKVFNKRIHDTWWMTETGSQLICNYPCMDIKPGSMGKPIPGVEAAIVDNQGNELPPYRMGNLAIKKGWPSMMHTIWNNPEKYESYFMPGGWYVSGDSAYMDEEGYFWFQGRVDDVIMTSGERVGPFEVESKLVEHPAIAEAGVIGKPDPVRGEIIKAFIALREGFEPSDKLKEEIRLFVKQGLAAHAAPREIEFKDKLPKTRSGKIMRRVLKAWELNLPAGDLSTMED.

Threonine 260 is a CoA binding site. ATP contacts are provided by residues 333–335 (GEP), 354–359 (DTWWMT), aspartate 440, and arginine 455. Serine 463 contributes to the CoA binding site. Arginine 466 lines the ATP pocket. Residues valine 477, histidine 479, and isoleucine 482 each coordinate Mg(2+). Lysine 524 is a binding site for CoA. Lysine 549 is subject to N6-acetyllysine.

The protein belongs to the ATP-dependent AMP-binding enzyme family. Interacts with FloT. Mg(2+) serves as cofactor. Acetylated. Deacetylation by the SIR2-homolog deacetylase activates the enzyme.

It localises to the cell membrane. The protein resides in the membrane raft. It catalyses the reaction acetate + ATP + CoA = acetyl-CoA + AMP + diphosphate. Catalyzes the conversion of acetate into acetyl-CoA (AcCoA), an essential intermediate at the junction of anabolic and catabolic pathways. AcsA undergoes a two-step reaction. In the first half reaction, AcsA combines acetate with ATP to form acetyl-adenylate (AcAMP) intermediate. In the second half reaction, it can then transfer the acetyl group from AcAMP to the sulfhydryl group of CoA, forming the product AcCoA. Has a role in growth and sporulation on acetate. This Bacillus subtilis (strain 168) protein is Acetyl-coenzyme A synthetase (acsA).